A 434-amino-acid polypeptide reads, in one-letter code: Methylenetetrahydrofolate--tRNA-(uracil-5-)-methyltransferase TrmFO (434 aa).

9–14 serves as a coordination point for FAD; sequence GAGLAG.

It belongs to the MnmG family. TrmFO subfamily. FAD serves as cofactor.

The protein localises to the cytoplasm. It catalyses the reaction uridine(54) in tRNA + (6R)-5,10-methylene-5,6,7,8-tetrahydrofolate + NADH + H(+) = 5-methyluridine(54) in tRNA + (6S)-5,6,7,8-tetrahydrofolate + NAD(+). The enzyme catalyses uridine(54) in tRNA + (6R)-5,10-methylene-5,6,7,8-tetrahydrofolate + NADPH + H(+) = 5-methyluridine(54) in tRNA + (6S)-5,6,7,8-tetrahydrofolate + NADP(+). Catalyzes the folate-dependent formation of 5-methyl-uridine at position 54 (M-5-U54) in all tRNAs. This Listeria welshimeri serovar 6b (strain ATCC 35897 / DSM 20650 / CCUG 15529 / CIP 8149 / NCTC 11857 / SLCC 5334 / V8) protein is Methylenetetrahydrofolate--tRNA-(uracil-5-)-methyltransferase TrmFO.